Here is a 248-residue protein sequence, read N- to C-terminus: Ankyrin repeat domain-containing protein 45 (248 aa).

Composition is skewed to acidic residues over residues 1 to 10 (MEPEETLESE) and 22 to 33 (EYEESQEAEETG). A disordered region spans residues 1 to 42 (MEPEETLESESSEKSLFSSQQEYEESQEAEETGAENPLLQPT). 2 ANK repeats span residues 75 to 104 (VGRN…NLNE) and 108 to 137 (RGYT…DIEA).

The protein localises to the cytoplasm. It is found in the midbody. The protein resides in the midbody ring. It localises to the cleavage furrow. Functionally, may play a role during cell division. This chain is Ankyrin repeat domain-containing protein 45 (Ankrd45), found in Mus musculus (Mouse).